Consider the following 191-residue polypeptide: Thymidine kinase (191 aa).

ATP-binding positions include 9–16 and 85–88; these read GTMNSGKT and DEAQ. The active-site Proton acceptor is Glu86. Residues Cys143, Cys146, Cys180, and His183 each contribute to the Zn(2+) site.

This sequence belongs to the thymidine kinase family. In terms of assembly, homotetramer.

The protein localises to the cytoplasm. The enzyme catalyses thymidine + ATP = dTMP + ADP + H(+). The sequence is that of Thymidine kinase from Streptococcus gordonii (strain Challis / ATCC 35105 / BCRC 15272 / CH1 / DL1 / V288).